The primary structure comprises 199 residues: 3-isopropylmalate dehydratase small subunit (199 aa).

This sequence belongs to the LeuD family. LeuD type 1 subfamily. In terms of assembly, heterodimer of LeuC and LeuD.

It carries out the reaction (2R,3S)-3-isopropylmalate = (2S)-2-isopropylmalate. Its pathway is amino-acid biosynthesis; L-leucine biosynthesis; L-leucine from 3-methyl-2-oxobutanoate: step 2/4. Its function is as follows. Catalyzes the isomerization between 2-isopropylmalate and 3-isopropylmalate, via the formation of 2-isopropylmaleate. The sequence is that of 3-isopropylmalate dehydratase small subunit from Mycobacteroides abscessus (strain ATCC 19977 / DSM 44196 / CCUG 20993 / CIP 104536 / JCM 13569 / NCTC 13031 / TMC 1543 / L948) (Mycobacterium abscessus).